A 192-amino-acid chain; its full sequence is UPF0312 protein Ent638_1570 (192 aa).

The N-terminal stretch at 1–22 is a signal peptide; that stretch reads MKKRLLGIALGSLLFTTGSAVA.

Belongs to the UPF0312 family. Type 1 subfamily.

It is found in the periplasm. This is UPF0312 protein Ent638_1570 from Enterobacter sp. (strain 638).